Here is a 645-residue protein sequence, read N- to C-terminus: Aspartate--tRNA ligase, mitochondrial (645 aa).

The N-terminal 47 residues, Met-1–Phe-47, are a transit peptide targeting the mitochondrion. Thr-219 bears the Phosphothreonine mark. Position 242 is a phosphoserine (Ser-242). The interval Gln-244 to Lys-247 is aspartate. Arg-266 contributes to the L-aspartate binding site. Arg-266–Glu-268 is an ATP binding site. N6-acetyllysine is present on Lys-382. ATP is bound at residue Glu-535. Residue Arg-542 participates in L-aspartate binding. Gly-584 to Arg-587 is a binding site for ATP.

This sequence belongs to the class-II aminoacyl-tRNA synthetase family. Type 1 subfamily. In terms of assembly, homodimer.

The protein resides in the mitochondrion matrix. It localises to the mitochondrion membrane. It catalyses the reaction tRNA(Asp) + L-aspartate + ATP = L-aspartyl-tRNA(Asp) + AMP + diphosphate. Functionally, catalyzes the attachment of aspartate to tRNA(Asp) in a two-step reaction: aspartate is first activated by ATP to form Asp-AMP and then transferred to the acceptor end of tRNA(Asp). The sequence is that of Aspartate--tRNA ligase, mitochondrial (DARS2) from Homo sapiens (Human).